A 473-amino-acid polypeptide reads, in one-letter code: Cysteine--tRNA ligase (473 aa).

A Zn(2+)-binding site is contributed by Cys28. Residues 30–40 (PTVYNMPHIGN) carry the 'HIGH' region motif. Zn(2+)-binding residues include Cys213, His238, and Glu242. The 'KMSKS' region motif lies at 270-274 (KMSKS). Lys273 serves as a coordination point for ATP.

This sequence belongs to the class-I aminoacyl-tRNA synthetase family. Requires Zn(2+) as cofactor.

It is found in the cytoplasm. It carries out the reaction tRNA(Cys) + L-cysteine + ATP = L-cysteinyl-tRNA(Cys) + AMP + diphosphate. This Methanosarcina acetivorans (strain ATCC 35395 / DSM 2834 / JCM 12185 / C2A) protein is Cysteine--tRNA ligase.